A 179-amino-acid polypeptide reads, in one-letter code: GTP-dependent dephospho-CoA kinase (179 aa).

GTP contacts are provided by Asp-43, Val-45, Asp-62, Glu-120, and Asp-143.

It belongs to the GTP-dependent DPCK family.

It catalyses the reaction 3'-dephospho-CoA + GTP = GDP + CoA + H(+). Its pathway is cofactor biosynthesis; coenzyme A biosynthesis. Its function is as follows. Catalyzes the GTP-dependent phosphorylation of the 3'-hydroxyl group of dephosphocoenzyme A to form coenzyme A (CoA). This is GTP-dependent dephospho-CoA kinase from Haloarcula marismortui (strain ATCC 43049 / DSM 3752 / JCM 8966 / VKM B-1809) (Halobacterium marismortui).